The primary structure comprises 163 residues: Large ribosomal subunit protein bL17 (163 aa).

Residues 123 to 135 (AEASRATRASASK) are compositionally biased toward low complexity. Residues 123 to 163 (AEASRATRASASKKAAEEAETEEVVEAPAEETATEEAAEEK) form a disordered region. Residues 140–163 (EAETEEVVEAPAEETATEEAAEEK) show a composition bias toward acidic residues.

It belongs to the bacterial ribosomal protein bL17 family. As to quaternary structure, part of the 50S ribosomal subunit. Contacts protein L32.

This chain is Large ribosomal subunit protein bL17, found in Corynebacterium glutamicum (strain ATCC 13032 / DSM 20300 / JCM 1318 / BCRC 11384 / CCUG 27702 / LMG 3730 / NBRC 12168 / NCIMB 10025 / NRRL B-2784 / 534).